The primary structure comprises 663 residues: MTEKANGVKSSPANNHNHHAPPAIKASGKDDHRASSRPQSAAADDTSSELQQLAEMDAPQQRRGGFRRIARLVGVLREWAYRNFREEEPRPDSFLERFRGPELHTVTTQQGDGKGDKDGEGKGTKKKFELFVLDPAGDWYYRWLFLIALPVLYNWCLLVARACFSDLQKGYYIVWLVLDYVSDVVYIADLFIRLRTGFLEQGLLVKDTKKLRDNYIHTMQFKLDVASIIPTDLIYFAVGIHNPEVRFNRLLHFARMFEFFDRTETRTSYPNIFRISNLILYILIIIHWNACIYYAISKSIGFGVDTWVYPNITDPEYGYLSREYIYCLYWSTLTLTTIGETPPPVKDEEYLFVIFDFLIGVLIFATIVGNVGSMISNMNATRAEFQAKIDAVKHYMQFRKVSKEMEAKVIRWFDYLWTNKKSVDEREVLKNLPAKLRAEIAINVHLSTLKKVRIFQDCEAGLLVELVLKLRPQVFSPGDYICRKGDIGKEMYIIKEGKLAVVADDGVTQYALLSAGSCFGEISILNIKGSKMGNRRTANIRSLGYSDLFCLSKDDLMEAVTEYPDAKRVLEERGREILMKEGLLDENEVAASMEVDVQEKLEQLETNMDTLYTRFARLLAEYTGAQQKLKQRITVLETKMKQNNEDDSLSDGMNSPEPPAEKP.

The segment at 1–61 is disordered; that stretch reads MTEKANGVKS…QLAEMDAPQQ (61 aa). Topologically, residues 1–144 are cytoplasmic; it reads MTEKANGVKS…PAGDWYYRWL (144 aa). Residues 12–23 are compositionally biased toward low complexity; sequence PANNHNHHAPPA. The chain crosses the membrane as a helical span at residues 145-166; it reads FLIALPVLYNWCLLVARACFSD. Over 167–176 the chain is Extracellular; the sequence is LQKGYYIVWL. A helical membrane pass occupies residues 177–197; it reads VLDYVSDVVYIADLFIRLRTG. Topologically, residues 198 to 222 are cytoplasmic; that stretch reads FLEQGLLVKDTKKLRDNYIHTMQFK. Residues 223 to 241 form a helical membrane-spanning segment; that stretch reads LDVASIIPTDLIYFAVGIH. The Extracellular portion of the chain corresponds to 242–246; sequence NPEVR. The chain crosses the membrane as a helical span at residues 247 to 265; it reads FNRLLHFARMFEFFDRTET. Residues 266–272 lie on the Cytoplasmic side of the membrane; sequence RTSYPNI. Residues 270–378 form an ion conduction pathway region; sequence PNIFRISNLI…GNVGSMISNM (109 aa). The helical transmembrane segment at 273–296 threads the bilayer; the sequence is FRISNLILYILIIIHWNACIYYAI. At 297–319 the chain is on the extracellular side; it reads SKSIGFGVDTWVYPNITDPEYGY. 2 helical membrane-spanning segments follow: residues 320–354 and 355–379; these read LSREYIYCLYWSTLTLTTIGETPPPVKDEEYLFVI and FDFLIGVLIFATIVGNVGSMISNMN. The segment at 337-340 is selectivity filter; sequence TIGE. The C-linker stretch occupies residues 380–456; sequence ATRAEFQAKI…STLKKVRIFQ (77 aa). The Cytoplasmic portion of the chain corresponds to 380–663; that stretch reads ATRAEFQAKI…NSPEPPAEKP (284 aa). Positions 460–580 are cyclic nucleotide-binding domain; the sequence is AGLLVELVLK…EERGREILMK (121 aa). 3',5'-cyclic GMP-binding residues include G520, S523, R536, and T537. The 3',5'-cyclic AMP site is built by R536 and T537. The stretch at 597–651 forms a coiled coil; it reads VQEKLEQLETNMDTLYTRFARLLAEYTGAQQKLKQRITVLETKMKQNNEDDSLSD. A disordered region spans residues 640-663; sequence MKQNNEDDSLSDGMNSPEPPAEKP.

The protein belongs to the cyclic nucleotide-gated cation channel (TC 1.A.1.5) family. CNGA2 subfamily. In terms of assembly, the olfactory cyclic nucleotide-gated channel is an heterotetramer composed of CNGA2, CNGA4 and CNGB1b subunits with 2:1:1 stoichiometry. As to expression, olfactory neurons.

It localises to the cell projection. The protein resides in the cilium membrane. The catalysed reaction is Ca(2+)(in) = Ca(2+)(out). The enzyme catalyses Na(+)(in) = Na(+)(out). It carries out the reaction K(+)(in) = K(+)(out). It catalyses the reaction NH4(+)(in) = NH4(+)(out). The catalysed reaction is Rb(+)(in) = Rb(+)(out). The enzyme catalyses Li(+)(in) = Li(+)(out). It carries out the reaction Cs(+)(in) = Cs(+)(out). Functionally, pore-forming subunit of the olfactory cyclic nucleotide-gated channel. Operates in the cilia of olfactory sensory neurons where chemical stimulation of the odorant is converted to an electrical signal. Mediates odorant-induced cAMP-dependent Ca(2+) influx triggering neuron depolarization. The rise of intracellular Ca(2+) levels potentiates the olfactory response by activating Ca(2+)-dependent Cl(-) channels, but it also serves as a negative feedback signal to desensitize the channel for rapid adaptation to odorants. Conducts cAMP- and cGMP-gated ion currents, with permeability for monovalent and divalent cations. This chain is Cyclic nucleotide-gated channel alpha-2, found in Bos taurus (Bovine).